The sequence spans 692 residues: NADH-ubiquinone oxidoreductase chain 5 (692 aa).

17 consecutive transmembrane segments (helical) span residues 5–23, 30–52, 81–103, 112–129, 133–155, 168–190, 200–222, 243–262, 272–294, 301–319, 329–351, 364–386, 409–431, 452–471, 511–528, 535–557, and 615–637; these read IIIL…GRKV, ILGC…EVGF, LTVS…SIGY, RFFS…ILVT, YLLM…SFWF, FLTN…WSLG, LAPY…GAMA, VSAL…LLIR, TVLL…IGLF, IIAY…AIGL, LINH…HAVV, SFLP…FPFM, NVYF…VIYL, IFLS…FGYL, LLPF…IVYY, VVDF…RFLV, and YALY…SIFF.

Belongs to the complex I subunit 5 family.

It localises to the mitochondrion inner membrane. The catalysed reaction is a ubiquinone + NADH + 5 H(+)(in) = a ubiquinol + NAD(+) + 4 H(+)(out). Its function is as follows. Core subunit of the mitochondrial membrane respiratory chain NADH dehydrogenase (Complex I) that is believed to belong to the minimal assembly required for catalysis. Complex I functions in the transfer of electrons from NADH to the respiratory chain. The immediate electron acceptor for the enzyme is believed to be ubiquinone. This Hypocrea jecorina (Trichoderma reesei) protein is NADH-ubiquinone oxidoreductase chain 5 (nd5).